Consider the following 118-residue polypeptide: Large ribosomal subunit protein bL20 (118 aa).

The protein belongs to the bacterial ribosomal protein bL20 family.

Functionally, binds directly to 23S ribosomal RNA and is necessary for the in vitro assembly process of the 50S ribosomal subunit. It is not involved in the protein synthesizing functions of that subunit. The sequence is that of Large ribosomal subunit protein bL20 from Francisella tularensis subsp. tularensis (strain WY96-3418).